The following is an 872-amino-acid chain: Armadillo repeat-containing protein 3 (872 aa).

ARM repeat units follow at residues 15-54, 57-96, 98-138, 140-179, 181-220, 222-262, 264-304, 306-345, 346-385, 388-427, 429-468, and 470-509; these read DVFD…KFAL, EENK…ILAS, NDVK…NMSA, YTSK…NLVQ, FQCR…VIAN, KESR…NCLE, MDTM…KAAY, PENR…AMCE, NSGS…NLTT, PANA…NMAM, EPLR…ATAC, and VEAR…VCAG. S-palmitoyl cysteine attachment occurs at residues Cys507 and Cys518. The tract at residues 610-693 is disordered; that stretch reads VSPPSSMEDK…SKGKKEEEKV (84 aa). Over residues 626–635 the composition is skewed to low complexity; it reads RSISSSSSLR. The span at 636-646 shows a compositional bias: basic residues; sequence RSSKEKNKKNS. Basic and acidic residues predominate over residues 675-693; the sequence is ATKEKGWRKSKGKKEEEKV.

As to quaternary structure, homodimer. Interacts with PIK3C3, PIK3R4 and BECN1. Interacts (via ARM domains) with ATG14. In terms of processing, palmitoylation is important for its function in autophagy. Expressed in skeletal muscle, brain, lung, kidney, prostate and testis. As to expression, mainly expressed in skeletal muscle, liver, spleen and thymus. In terms of tissue distribution, expressed only in the testis among normal tissues but is expressed frequently in various cancer tissues and, particularly, in pancreatic, lung and endometrial cancers.

Its function is as follows. Essential for male fertility and sperm motility. During spermatogenesis, promotes the autophagic degradation of excessive ribosomes, providing energy resources for mitochondria and thus ensuring sperm flagellar motility. In Homo sapiens (Human), this protein is Armadillo repeat-containing protein 3 (ARMC3).